A 229-amino-acid polypeptide reads, in one-letter code: Protein GrpE (229 aa).

2 disordered regions span residues 1-49 and 207-229; these read MTEG…SANS and DSTAKTEQGELGDNVTPHKEDGD. Over residues 13–24 the composition is skewed to basic and acidic residues; that stretch reads TDKRRIDPDTGE.

The protein belongs to the GrpE family. Homodimer.

Its subcellular location is the cytoplasm. Participates actively in the response to hyperosmotic and heat shock by preventing the aggregation of stress-denatured proteins, in association with DnaK and GrpE. It is the nucleotide exchange factor for DnaK and may function as a thermosensor. Unfolded proteins bind initially to DnaJ; upon interaction with the DnaJ-bound protein, DnaK hydrolyzes its bound ATP, resulting in the formation of a stable complex. GrpE releases ADP from DnaK; ATP binding to DnaK triggers the release of the substrate protein, thus completing the reaction cycle. Several rounds of ATP-dependent interactions between DnaJ, DnaK and GrpE are required for fully efficient folding. This chain is Protein GrpE, found in Mycobacterium leprae (strain TN).